Reading from the N-terminus, the 342-residue chain is Protein rough sheath 2 homolog (342 aa).

HTH myb-type domains lie at 1-58 (MQPP…KNYL) and 59-113 (RPGI…EKQQ). DNA-binding regions (H-T-H motif) lie at residues 32-58 (WSLV…KNYL) and 86-109 (WKKI…EVFK). Positions 253 to 304 (RRREATEEFEAKMRALREEQAAAVERVEAEYREKMAGLRRDAEAKEQKMAEQ) form a coiled coil.

The protein localises to the nucleus. In terms of biological role, transcription factor required for normal cell differentiation. May interact with other proteins to repress the knox homeobox genes. This is Protein rough sheath 2 homolog (RS2) from Oryza sativa subsp. japonica (Rice).